A 1480-amino-acid chain; its full sequence is C-type mannose receptor 2 (1480 aa).

A signal peptide spans 1 to 30; it reads MGPIRPALAPWPRHLLRCVLLLGGLRLGHP. The Extracellular portion of the chain corresponds to 31-1413; it reads ADSAAALLEP…SAALPENPVA (1383 aa). Residues 40-166 form the Ricin B-type lectin domain; the sequence is PDVFLIFSQG…WNIYGSEEDL (127 aa). Cystine bridges form between Cys53/Cys67 and Cys92/Cys111. Residues Asn101 and Asn139 are each glycosylated (N-linked (GlcNAc...) asparagine). Residues 181–229 form the Fibronectin type-II domain; it reads SHGKPCTIPFKYDNQWFHGCTSTGREDGHLWCATTQDYGKDERWGFCPI. 4 cysteine pairs are disulfide-bonded: Cys186-Cys212, Cys200-Cys227, Cys265-Cys358, and Cys334-Cys350. Positions 243–359 constitute a C-type lectin 1 domain; sequence LTDSCYQFNF…CSIALPYVCK (117 aa). Asn363 carries N-linked (GlcNAc...) asparagine glycosylation. 7 consecutive C-type lectin domains span residues 388-504, 527-643, 677-808, 831-950, 978-1106, 1131-1242, and 1271-1391; these read FQGH…SICK, HSPS…RYIC, KLRH…WICK, FQEA…YICK, FLNK…GFIC, YLNR…GAVC, and FREH…GVVC. 7 disulfides stabilise this stretch: Cys409–Cys503, Cys480–Cys495, Cys617–Cys634, Cys703–Cys807, Cys784–Cys799, Cys852–Cys949, and Cys926–Cys941. The N-linked (GlcNAc...) asparagine glycan is linked to Asn1028. A disulfide bond links Cys1077 and Cys1097. Lys1141 is covalently cross-linked (Glycyl lysine isopeptide (Lys-Gly) (interchain with G-Cter in SUMO1)). An intrachain disulfide couples Cys1219 to Cys1233. Asn1348 is a glycosylation site (N-linked (GlcNAc...) asparagine). A disulfide bridge connects residues Cys1367 and Cys1382. Residues 1414–1434 traverse the membrane as a helical segment; sequence LVVVLTAAVLLLLALLTGALI. Over 1435–1480 the chain is Cytoplasmic; the sequence is LYRRRQSAERGSFEGARYSRSSRSGPAEATEKNILVSDMEMNEQQE. Positions 1446–1480 are disordered; the sequence is SFEGARYSRSSRSGPAEATEKNILVSDMEMNEQQE.

As to quaternary structure, interacts directly with PLAUR/UPAR and PLAU/pro-UPA to form a tri-molecular complex. Interacts with collagen V. Interacts with C-terminal region of type I collagen/COL1A1. Post-translationally, N-glycosylated. Phosphorylated.

It is found in the cell membrane. In terms of biological role, may play a role as endocytotic lectin receptor displaying calcium-dependent lectin activity. Internalizes glycosylated ligands from the extracellular space for release in an endosomal compartment via clathrin-mediated endocytosis. May be involved in plasminogen activation system controlling the extracellular level of PLAUR/PLAU, and thus may regulate protease activity at the cell surface. May contribute to cellular uptake, remodeling and degradation of extracellular collagen matrices. May participate in remodeling of extracellular matrix cooperating with the matrix metalloproteinases (MMPs) secreted by hepatic stellate cells. May mediate endocytosis of partially degraded collagens and glycoproteins produced in the extracellular matrix by MMPs. The sequence is that of C-type mannose receptor 2 (Mrc2) from Rattus norvegicus (Rat).